The chain runs to 348 residues: GMP reductase 2 (348 aa).

NADP(+) contacts are provided by residues 26-27 (SR), Lys78, 129-131 (DVA), and 180-181 (IG). Gly181, Gly183, and Cys186 together coordinate K(+). Catalysis depends on Cys186, which acts as the Thioimidate intermediate. Thr188 (proton donor/acceptor) is an active-site residue. Residue Arg189 coordinates K(+). GMP contacts are provided by residues 219–221 (DGG), 242–243 (GG), 268–270 (GMS), and 286–290 (RASEG). Residues Met269 and 285–286 (YR) contribute to the NADP(+) site. At Lys291 the chain carries N6-acetyllysine. Position 314 to 317 (314 to 317 (STCT)) interacts with NADP(+).

It belongs to the IMPDH/GMPR family. GuaC type 1 subfamily. As to quaternary structure, homotetramer.

It carries out the reaction IMP + NH4(+) + NADP(+) = GMP + NADPH + 2 H(+). In terms of biological role, catalyzes the irreversible NADPH-dependent deamination of GMP to IMP. It functions in the conversion of nucleobase, nucleoside and nucleotide derivatives of G to A nucleotides, and in maintaining the intracellular balance of A and G nucleotides. Plays a role in modulating cellular differentiation. This chain is GMP reductase 2, found in Bos taurus (Bovine).